Here is an 88-residue protein sequence, read N- to C-terminus: Small ribosomal subunit protein bS20 (88 aa).

The protein belongs to the bacterial ribosomal protein bS20 family.

Binds directly to 16S ribosomal RNA. This chain is Small ribosomal subunit protein bS20, found in Clostridium botulinum (strain ATCC 19397 / Type A).